Here is a 372-residue protein sequence, read N- to C-terminus: Cyclin-dependent kinase 9 (372 aa).

Residues 19–315 form the Protein kinase domain; the sequence is YEKLAKIGQG…SDDALNHDFF (297 aa). 25-33 is a binding site for ATP; sequence IGQGTFGEV. Lys-44 bears the N6-acetyllysine; by EP300/CBP, PCAF/KAT2B and GCN5/KAT2A mark. ATP-binding positions include Lys-48 and 104–106; that span reads DFC. An N6-acetyllysine; by PCAF/KAT2B and GCN5/KAT2A modification is found at Lys-48. Asp-149 acts as the Proton acceptor in catalysis. The T-loop stretch occupies residues 166–191; that stretch reads ADFGLARAFSLAKNSQPNRYTNRVVT. Residue Asp-167 participates in ATP binding. A Phosphoserine modification is found at Ser-175. Phosphothreonine; by CaMK1D is present on Thr-186. Residues 343 to 372 form a disordered region; it reads RRKGSQITQQSTNQSRNPATTNQTEFERVF. Residue Ser-347 is modified to Phosphoserine; by CDK9 and PKA. The segment covering 347-366 has biased composition (polar residues); the sequence is SQITQQSTNQSRNPATTNQT. Residue Thr-350 is modified to Phosphothreonine; by CDK9. Residue Ser-353 is modified to Phosphoserine; by CDK9. The residue at position 354 (Thr-354) is a Phosphothreonine; by CDK9. Ser-357 is subject to Phosphoserine; by CDK9. Phosphothreonine; by CDK9 occurs at positions 362 and 363.

This sequence belongs to the protein kinase superfamily. CMGC Ser/Thr protein kinase family. CDC2/CDKX subfamily. In terms of assembly, component of the super elongation complex (SEC), at least composed of EAF1, EAF2, CDK9, MLLT3/AF9, AFF (AFF1 or AFF4), the P-TEFb complex and ELL (ELL, ELL2 or ELL3). Associates with CCNT1/cyclin-T1, CCNT2/cyclin-T2 (isoform A and isoform B) or CCNK/cyclin-K to form active P-TEFb. P-TEFb forms a complex with AFF4/AF5Q31 and is part of the super elongation complex (SEC). Component of a complex which is composed of at least 5 members: HTATSF1/Tat-SF1, P-TEFb complex, RNA pol II, SUPT5H, and NCL/nucleolin. Associates with UBR5 and forms a transcription regulatory complex composed of CDK9, RNAP II, UBR5 and TFIIS/TCEA1 that can stimulate target gene transcription (e.g. gamma fibrinogen/FGG) by recruiting their promoters. Component of the 7SK snRNP inactive complex which is composed of at least 8 members: P-TEFb (composed of CDK9 and CCNT1/cyclin-T1), HEXIM1, HEXIM2, LARP7, BCDIN3, SART3 proteins and 7SK and U6 snRNAs. This inactive 7SK snRNP complex can also interact with NCOR1 and HDAC3, probably to regulate CDK9 acetylation. Release of P-TEFb from P-TEFb/7SK snRNP complex requires both PP2B to transduce calcium Ca(2+) signaling in response to stimuli (e.g. UV or hexamethylene bisacetamide (HMBA)), and PPP1CA to dephosphorylate Thr-186. This released P-TEFb remains inactive in the pre-initiation complex with BRD4 until new Thr-186 phosphorylation occurs after the synthesis of a short RNA. Interacts with BRD4; to target chromatin binding. Interacts with JMJD6. Interacts with activated nuclear STAT3 and RELA/p65. Binds to AR and MYOD1. Forms a complex composed of CDK9, CCNT1/cyclin-T1, EP300 and GATA4 that stimulates hypertrophy in cardiomyocytes. The large PER complex involved in the repression of transcriptional termination is composed of at least PER2, CDK9, DDX5, DHX9, NCBP1 and POLR2A (active). Interacts with HSF1. Interacts with TBX21. Interacts with WDR43. Interacts with ZMYND8; the association appears to occur between homodimeric ZMYND8 and the activated form of the P-TEFb complex. Post-translationally, autophosphorylation at Thr-186, Ser-347, Thr-350, Ser-353, Thr-354 and Ser-357 triggers kinase activity by promoting cyclin and substrate binding upon conformational changes. Thr-186 phosphorylation requires the calcium Ca(2+) signaling pathway, including CaMK1D and calmodulin. This inhibition is relieved by Thr-29 dephosphorylation. Phosphorylation at Ser-175 inhibits kinase activity. Can be phosphorylated on either Thr-362 or Thr-363 but not on both simultaneously. Dephosphorylation of Thr-186 by PPM1A and PPM1B blocks CDK9 activity and may lead to CDK9 proteasomal degradation. However, PPP1CA-mediated Thr-186 dephosphorylation is required to release P-TEFb from its inactive P-TEFb/7SK snRNP complex. Dephosphorylated at Ser-347 by the PNUTS-PP1 complex during RNA polymerase II transcription pause-release. Dephosphorylation of C-terminus Thr and Ser residues by protein phosphatase-1 (PP1) triggers CDK9 activity. In terms of processing, N6-acetylation of Lys-44 promotes kinase activity, whereas acetylation of both Lys-44 and Lys-48 mediated by PCAF/KAT2B and GCN5/KAT2A reduces kinase activity. The acetylated form associates with PML bodies in the nuclear matrix and with the transcriptionally silent HIV-1 genome; deacetylated upon transcription stimulation. Deacetylated by SIRT7, promoting the kinase activity and subsequent 'Ser-2' phosphorylation of the C-terminal domain (CTD) of RNA polymerase II. Post-translationally, polyubiquitinated and thus activated by UBR5. This ubiquitination is promoted by TFIIS/TCEA1 and favors 'Ser-2' phosphorylation of RPB1/POLR2A CTD. As to expression, expressed at high levels in brain and kidney.

Its subcellular location is the nucleus. It is found in the cytoplasm. The protein resides in the PML body. It carries out the reaction L-seryl-[protein] + ATP = O-phospho-L-seryl-[protein] + ADP + H(+). The catalysed reaction is L-threonyl-[protein] + ATP = O-phospho-L-threonyl-[protein] + ADP + H(+). It catalyses the reaction [DNA-directed RNA polymerase] + ATP = phospho-[DNA-directed RNA polymerase] + ADP + H(+). With respect to regulation, activation by Thr-186 phosphorylation is calcium Ca(2+) signaling pathway-dependent; actively inactivated by dephosphorylation mediated by PPP1CA, PPM1A and PPM1B. Reversibly repressed by acetylation at Lys-44 and Lys-48. Functionally, protein kinase involved in the regulation of transcription. Member of the cyclin-dependent kinase pair (CDK9/cyclin-T) complex, also called positive transcription elongation factor b (P-TEFb), which facilitates the transition from abortive to productive elongation by phosphorylating the CTD (C-terminal domain) of the large subunit of RNA polymerase II (RNAP II) POLR2A, SUPT5H and RDBP. This complex is inactive when in the 7SK snRNP complex form. Phosphorylates EP300, MYOD1, RPB1/POLR2A and AR and the negative elongation factors DSIF and NELFE. Regulates cytokine inducible transcription networks by facilitating promoter recognition of target transcription factors (e.g. TNF-inducible RELA/p65 activation and IL-6-inducible STAT3 signaling). Promotes RNA synthesis in genetic programs for cell growth, differentiation and viral pathogenesis. P-TEFb is also involved in cotranscriptional histone modification, mRNA processing and mRNA export. Modulates a complex network of chromatin modifications including histone H2B monoubiquitination (H2Bub1), H3 lysine 4 trimethylation (H3K4me3) and H3K36me3; integrates phosphorylation during transcription with chromatin modifications to control co-transcriptional histone mRNA processing. The CDK9/cyclin-K complex has also a kinase activity towards CTD of RNAP II and can substitute for CDK9/cyclin-T P-TEFb in vitro. Replication stress response protein; the CDK9/cyclin-K complex is required for genome integrity maintenance, by promoting cell cycle recovery from replication arrest and limiting single-stranded DNA amount in response to replication stress, thus reducing the breakdown of stalled replication forks and avoiding DNA damage. In addition, probable function in DNA repair of isoform 2 via interaction with KU70/XRCC6. Promotes cardiac myocyte enlargement. RPB1/POLR2A phosphorylation on 'Ser-2' in CTD activates transcription. AR phosphorylation modulates AR transcription factor promoter selectivity and cell growth. DSIF and NELF phosphorylation promotes transcription by inhibiting their negative effect. The phosphorylation of MYOD1 enhances its transcriptional activity and thus promotes muscle differentiation. Catalyzes phosphorylation of KAT5, promoting KAT5 recruitment to chromatin and histone acetyltransferase activity. The polypeptide is Cyclin-dependent kinase 9 (Cdk9) (Mus musculus (Mouse)).